The following is an 88-amino-acid chain: Small ribosomal subunit protein uS17 (88 aa).

This sequence belongs to the universal ribosomal protein uS17 family. Part of the 30S ribosomal subunit.

Its function is as follows. One of the primary rRNA binding proteins, it binds specifically to the 5'-end of 16S ribosomal RNA. The polypeptide is Small ribosomal subunit protein uS17 (Synechococcus sp. (strain WH7803)).